Reading from the N-terminus, the 89-residue chain is MSVADIKKAEIVSQFQRAQGDTGSPEVQVALLTARINELTGHFKEHAKDHHSRRGLLRMVSRRRKLLDYLKGRNPDSYRALIEKLGLRK.

Belongs to the universal ribosomal protein uS15 family. As to quaternary structure, part of the 30S ribosomal subunit. Forms a bridge to the 50S subunit in the 70S ribosome, contacting the 23S rRNA.

Its function is as follows. One of the primary rRNA binding proteins, it binds directly to 16S rRNA where it helps nucleate assembly of the platform of the 30S subunit by binding and bridging several RNA helices of the 16S rRNA. Forms an intersubunit bridge (bridge B4) with the 23S rRNA of the 50S subunit in the ribosome. This is Small ribosomal subunit protein uS15 from Bordetella avium (strain 197N).